Reading from the N-terminus, the 368-residue chain is MPLTGRKIRVLVVDDSAFMRKVLKDIINSDPELEVCGEARDGIEAIEMVQKCRPDVVTLDVEMPRMNGLDALRVIMKKYPVPVIMISALTQEGAEATIKALEYGAIDFIPKPSSSISINMRELKDEIIAKIKEAAKVPRRFLELRRIRLLRVQKAKKVKPSVPARIAVAIAASTGGPQSLLKIFPKFPENLKAGILLVQHMPPGFTRSFAKRLDSVSKIDVKEAEEGDVVEEGKAYVAPGDYHMEVTLRGGKPVITLNKKPKMHGVRPAADPMMITAAQVFGRRTVGVVMTGMGRDGAQGIVEIKKRGGITIAQDEKTSIIFGMPKAAIETGMVDYVVPLEKIPETVVRAVEMIRGGGNLGRHVTIPR.

The Response regulatory domain maps to 9-126 (RVLVVDDSAF…SINMRELKDE (118 aa)). Residue aspartate 60 is modified to 4-aspartylphosphate. In terms of domain architecture, CheB-type methylesterase spans 161–354 (SVPARIAVAI…ETVVRAVEMI (194 aa)). Residues serine 173, histidine 200, and aspartate 296 contribute to the active site.

It belongs to the CheB family. Phosphorylated by CheA. Phosphorylation of the N-terminal regulatory domain activates the methylesterase activity.

It localises to the cytoplasm. The catalysed reaction is [protein]-L-glutamate 5-O-methyl ester + H2O = L-glutamyl-[protein] + methanol + H(+). It carries out the reaction L-glutaminyl-[protein] + H2O = L-glutamyl-[protein] + NH4(+). Involved in chemotaxis. Part of a chemotaxis signal transduction system that modulates chemotaxis in response to various stimuli. Catalyzes the demethylation of specific methylglutamate residues introduced into the chemoreceptors (methyl-accepting chemotaxis proteins or MCP) by CheR. Also mediates the irreversible deamidation of specific glutamine residues to glutamic acid. In Pyrococcus abyssi (strain GE5 / Orsay), this protein is Protein-glutamate methylesterase/protein-glutamine glutaminase.